Here is a 249-residue protein sequence, read N- to C-terminus: Electron transfer flavoprotein subunit beta (249 aa).

It belongs to the ETF beta-subunit/FixA family. In terms of assembly, heterodimer of an alpha and a beta subunit. FAD is required as a cofactor. It depends on AMP as a cofactor.

Its function is as follows. The electron transfer flavoprotein serves as a specific electron acceptor for other dehydrogenases. It transfers the electrons to the main respiratory chain via ETF-ubiquinone oxidoreductase (ETF dehydrogenase). This is Electron transfer flavoprotein subunit beta (etfB) from Bradyrhizobium diazoefficiens (strain JCM 10833 / BCRC 13528 / IAM 13628 / NBRC 14792 / USDA 110).